The primary structure comprises 430 residues: Protein translocase subunit SecY (430 aa).

The next 10 helical transmembrane spans lie at 18–38, 68–88, 117–137, 147–167, 174–194, 217–237, 270–290, 308–328, 368–388, and 389–409; these read IFFTLAMLVIFKIGTYIPAPG, FSIFAMGIMPYITASIVMQLL, FAIILAFIQSIGMAFQFNNYL, VMSYLLIAVVLTAGTAFLIWL, FGVGNGISLIIFAGILSTLPS, ILGLIVALILLTVGAIFVLEA, VIPVIFAMAFFLLPRTLTLFF, NIGMIIYVVLIIAFAYFYAFV, FVGSIFLAAIAILPIIATKFM, and GLPQSIQIGGTSLLIVIGVAI.

Belongs to the SecY/SEC61-alpha family. In terms of assembly, component of the Sec protein translocase complex. Heterotrimer consisting of SecY, SecE and SecG subunits. The heterotrimers can form oligomers, although 1 heterotrimer is thought to be able to translocate proteins. Interacts with the ribosome. Interacts with SecDF, and other proteins may be involved. Interacts with SecA.

The protein resides in the cell membrane. The central subunit of the protein translocation channel SecYEG. Consists of two halves formed by TMs 1-5 and 6-10. These two domains form a lateral gate at the front which open onto the bilayer between TMs 2 and 7, and are clamped together by SecE at the back. The channel is closed by both a pore ring composed of hydrophobic SecY resides and a short helix (helix 2A) on the extracellular side of the membrane which forms a plug. The plug probably moves laterally to allow the channel to open. The ring and the pore may move independently. The polypeptide is Protein translocase subunit SecY (Staphylococcus epidermidis (strain ATCC 35984 / DSM 28319 / BCRC 17069 / CCUG 31568 / BM 3577 / RP62A)).